Reading from the N-terminus, the 236-residue chain is 2-C-methyl-D-erythritol 4-phosphate cytidylyltransferase (236 aa).

Belongs to the IspD/TarI cytidylyltransferase family. IspD subfamily.

It catalyses the reaction 2-C-methyl-D-erythritol 4-phosphate + CTP + H(+) = 4-CDP-2-C-methyl-D-erythritol + diphosphate. The protein operates within isoprenoid biosynthesis; isopentenyl diphosphate biosynthesis via DXP pathway; isopentenyl diphosphate from 1-deoxy-D-xylulose 5-phosphate: step 2/6. Functionally, catalyzes the formation of 4-diphosphocytidyl-2-C-methyl-D-erythritol from CTP and 2-C-methyl-D-erythritol 4-phosphate (MEP). This chain is 2-C-methyl-D-erythritol 4-phosphate cytidylyltransferase, found in Symbiobacterium thermophilum (strain DSM 24528 / JCM 14929 / IAM 14863 / T).